The primary structure comprises 162 residues: Small ribosomal subunit protein uS5 (162 aa).

An S5 DRBM domain is found at 7 to 70 (EEKMILIRRT…YARRNMVEVP (64 aa)).

The protein belongs to the universal ribosomal protein uS5 family. As to quaternary structure, part of the 30S ribosomal subunit. Contacts proteins S4 and S8.

In terms of biological role, with S4 and S12 plays an important role in translational accuracy. Located at the back of the 30S subunit body where it stabilizes the conformation of the head with respect to the body. The chain is Small ribosomal subunit protein uS5 (rpsE) from Thermus thermophilus (strain ATCC BAA-163 / DSM 7039 / HB27).